Here is a 150-residue protein sequence, read N- to C-terminus: 3-dehydroquinate dehydratase (150 aa).

Tyr-26 functions as the Proton acceptor in the catalytic mechanism. Residues Asn-77, His-83, and Asp-90 each contribute to the substrate site. The active-site Proton donor is His-103. Substrate contacts are provided by residues 104 to 105 (LS) and Arg-114.

Belongs to the type-II 3-dehydroquinase family. As to quaternary structure, homododecamer.

It catalyses the reaction 3-dehydroquinate = 3-dehydroshikimate + H2O. It participates in metabolic intermediate biosynthesis; chorismate biosynthesis; chorismate from D-erythrose 4-phosphate and phosphoenolpyruvate: step 3/7. Catalyzes a trans-dehydration via an enolate intermediate. The chain is 3-dehydroquinate dehydratase from Mannheimia succiniciproducens (strain KCTC 0769BP / MBEL55E).